We begin with the raw amino-acid sequence, 457 residues long: Argininosuccinate lyase (457 aa).

This sequence belongs to the lyase 1 family. Argininosuccinate lyase subfamily.

The protein resides in the cytoplasm. It carries out the reaction 2-(N(omega)-L-arginino)succinate = fumarate + L-arginine. It participates in amino-acid biosynthesis; L-arginine biosynthesis; L-arginine from L-ornithine and carbamoyl phosphate: step 3/3. The polypeptide is Argininosuccinate lyase (Escherichia coli O7:K1 (strain IAI39 / ExPEC)).